The sequence spans 231 residues: Large ribosomal subunit protein uL5m (231 aa).

The protein belongs to the universal ribosomal protein uL5 family.

The protein resides in the mitochondrion. This Prototheca wickerhamii protein is Large ribosomal subunit protein uL5m (RPL5).